Consider the following 156-residue polypeptide: 6,7-dimethyl-8-ribityllumazine synthase (156 aa).

5-amino-6-(D-ribitylamino)uracil-binding positions include phenylalanine 23, 57–59 (AFE), and 81–83 (AVI). 86–87 (ST) is a binding site for (2S)-2-hydroxy-3-oxobutyl phosphate. The active-site Proton donor is histidine 89. Position 114 (phenylalanine 114) interacts with 5-amino-6-(D-ribitylamino)uracil. Position 128 (arginine 128) interacts with (2S)-2-hydroxy-3-oxobutyl phosphate.

This sequence belongs to the DMRL synthase family.

The catalysed reaction is (2S)-2-hydroxy-3-oxobutyl phosphate + 5-amino-6-(D-ribitylamino)uracil = 6,7-dimethyl-8-(1-D-ribityl)lumazine + phosphate + 2 H2O + H(+). It functions in the pathway cofactor biosynthesis; riboflavin biosynthesis; riboflavin from 2-hydroxy-3-oxobutyl phosphate and 5-amino-6-(D-ribitylamino)uracil: step 1/2. Its function is as follows. Catalyzes the formation of 6,7-dimethyl-8-ribityllumazine by condensation of 5-amino-6-(D-ribitylamino)uracil with 3,4-dihydroxy-2-butanone 4-phosphate. This is the penultimate step in the biosynthesis of riboflavin. This chain is 6,7-dimethyl-8-ribityllumazine synthase, found in Campylobacter fetus subsp. fetus (strain 82-40).